A 498-amino-acid chain; its full sequence is U4/U6 small nuclear ribonucleoprotein Prp31 (498 aa).

The tract at residues 1 to 24 (MSLADELLADLEEAAEEEEENLID) is disordered. The segment covering 7 to 24 (LLADLEEAAEEEEENLID) has biased composition (acidic residues). Coiled coils occupy residues 84–119 (EAAP…KYSK) and 180–214 (DEEL…MSFI). One can recognise a Nop domain in the interval 214–332 (IAPNLSIIVG…IERKFDKWQE (119 aa)). A disordered region spans residues 333-356 (PPPVKQVKPLPAPLDGQRKKRGGR). Positions 350-363 (RKKRGGRRYRKMKE) match the Nuclear localization signal (NLS) motif.

The protein belongs to the PRP31 family. Identified in the spliceosome B complex. Component of the U4/U6-U5 tri-snRNP complex. Component of some MLL1/MLL complex.

It localises to the nucleus. Its subcellular location is the nucleus speckle. It is found in the cajal body. Functionally, involved in pre-mRNA splicing as component of the spliceosome. Required for the assembly of the U4/U5/U6 tri-snRNP complex, one of the building blocks of the spliceosome. The chain is U4/U6 small nuclear ribonucleoprotein Prp31 (prpf31) from Xenopus laevis (African clawed frog).